The following is an 81-amino-acid chain: Protein Vpu (81 aa).

The Extracellular portion of the chain corresponds to 1-7 (MQSLEIL). A helical transmembrane segment spans residues 8–28 (AIVALVVAAILAIVVWTIVGI). Topologically, residues 29–81 (EIRKTLRQKKIDRLIDRIRERAEDSGNESDGDEEELSALVEMGHHAPWDVDDL) are cytoplasmic. The interval 50 to 81 (AEDSGNESDGDEEELSALVEMGHHAPWDVDDL) is disordered. Phosphoserine; by host CK2 is present on residues Ser53 and Ser57. Over residues 53–64 (SGNESDGDEEEL) the composition is skewed to acidic residues. The segment covering 70–81 (MGHHAPWDVDDL) has biased composition (basic and acidic residues).

The protein belongs to the HIV-1 VPU protein family. Homopentamer. Interacts with host CD4 and BRTC; these interactions induce proteasomal degradation of CD4. Interacts with host BST2; this interaction leads to the degradation of host BST2. Interacts with host FBXW11. Interacts with host AP1M1; this interaction plays a role in the mistrafficking and subsequent degradation of host BST2. Interacts with host RANBP2; this interaction allows Vpu to down-regulate host BLM sumoylation. In terms of processing, phosphorylated by host CK2. This phosphorylation is necessary for interaction with human BTRC and degradation of CD4.

The protein resides in the host membrane. Its activity is regulated as follows. Ion channel activity is inhibited by hexamethylene amiloride in vitro. Functionally, enhances virion budding by targeting host CD4 and Tetherin/BST2 to proteasome degradation. Degradation of CD4 prevents any unwanted premature interactions between viral Env and its host receptor CD4 in the endoplasmic reticulum. Degradation of antiretroviral protein Tetherin/BST2 is important for virion budding, as BST2 tethers new viral particles to the host cell membrane. Mechanistically, Vpu bridges either CD4 or BST2 to BTRC, a substrate recognition subunit of the Skp1/Cullin/F-box protein E3 ubiquitin ligase, induces their ubiquitination and subsequent proteasomal degradation. The alteration of the E3 ligase specificity by Vpu seems to promote the degradation of host IKBKB, leading to NF-kappa-B down-regulation and subsequent apoptosis. Acts as a viroporin that forms an oligomeric ion channel in membranes. Modulates the host DNA repair mechanisms to promote degradation of nuclear viral cDNA in cells that are already productively infected in order to suppress immune sensing and proviral hyper-integration (superinfection). Manipulates PML-NBs and modulates SUMOylation of host BLM protein thereby enhancing its DNA-end processing activity toward viral unintegrated linear DNA. Also inhibits RAD52-mediated homologous repair of viral cDNA, preventing the generation of dead-end circular forms of single copies of the long terminal repeat and permitting sustained nucleolytic attack. In Homo sapiens (Human), this protein is Protein Vpu.